A 226-amino-acid polypeptide reads, in one-letter code: Insulin-like growth factor-binding protein 6 (226 aa).

The N-terminal stretch at 1-25 (MTWDGLPTQPLLMLLMLLFAAGSES) is a signal peptide. An IGFBP N-terminal domain is found at 26 to 99 (ALAGCPGCGP…LIGQGRCQRA (74 aa)). Disulfide bonds link Cys-30–Cys-33, Cys-49–Cys-55, Cys-63–Cys-76, and Cys-70–Cys-96. Positions 92-148 (GQGRCQRARGPSEETTKESKPHGGASRPRDRDRQKNPRTSAAPIRPSPVQDGEMGPC) are disordered. Residues 101-126 (GPSEETTKESKPHGGASRPRDRDRQK) show a composition bias toward basic and acidic residues. Positions 145 to 220 (MGPCRRHLDS…SPDGQGSSQC (76 aa)) constitute a Thyroglobulin type-1 domain. Disulfide bonds link Cys-148–Cys-176, Cys-187–Cys-198, and Cys-200–Cys-220. The interval 205–226 (GQPLPVSPDGQGSSQCSARSSG) is disordered. Residues 214 to 226 (GQGSSQCSARSSG) show a composition bias toward polar residues.

As to quaternary structure, interacts (via C-terminal domain) with PHB2. O-glycosylated.

It localises to the secreted. Its function is as follows. IGF-binding proteins prolong the half-life of the IGFs and have been shown to either inhibit or stimulate the growth promoting effects of the IGFs on cell culture. They alter the interaction of IGFs with their cell surface receptors. Activates the MAPK signaling pathway and induces cell migration. In Rattus norvegicus (Rat), this protein is Insulin-like growth factor-binding protein 6 (Igfbp6).